We begin with the raw amino-acid sequence, 124 residues long: KESAAAKFERQHMDSSTSSASSSNYCNQMMKSRNLTQSRCKPVNTFVHESLADVQAVCSQKNVACKNGQTNCYQSYSTMSITDCRETGSSKYPNCAYKTTQAKKHIIVACEGNPYVPVHFDASV.

The segment covering 1 to 13 has biased composition (basic and acidic residues); the sequence is KESAAAKFERQHM. Residues 1–24 form a disordered region; it reads KESAAAKFERQHMDSSTSSASSSN. Substrate-binding residues include Lys7 and Arg10. The Proton acceptor role is filled by His12. Intrachain disulfides connect Cys26–Cys84, Cys40–Cys95, Cys58–Cys110, and Cys65–Cys72. An N-linked (GlcNAc...) asparagine; partial glycan is attached at Asn34. Residues 41 to 45, Lys66, and Arg85 each bind substrate; that span reads KPVNT. Catalysis depends on His119, which acts as the Proton donor.

Belongs to the pancreatic ribonuclease family. As to quaternary structure, monomer. Interacts with and forms tight 1:1 complexes with RNH1. Dimerization of two such complexes may occur. Interaction with RNH1 inhibits this protein. In terms of tissue distribution, pancreas.

The protein resides in the secreted. The enzyme catalyses an [RNA] containing cytidine + H2O = an [RNA]-3'-cytidine-3'-phosphate + a 5'-hydroxy-ribonucleotide-3'-[RNA].. The catalysed reaction is an [RNA] containing uridine + H2O = an [RNA]-3'-uridine-3'-phosphate + a 5'-hydroxy-ribonucleotide-3'-[RNA].. Its function is as follows. Endonuclease that catalyzes the cleavage of RNA on the 3' side of pyrimidine nucleotides. Acts on single-stranded and double-stranded RNA. The chain is Ribonuclease pancreatic (RNASE1) from Aepyceros melampus (Impala).